The sequence spans 149 residues: Ricin B-like lectin (149 aa).

N-acetylserine is present on S2. A carbohydrate contacts are provided by D21, G24, N39, and N47. The segment at 110-112 is involved in dimerization; that stretch reads PNL.

Homodimer. Post-translationally, the N-terminus is blocked.

Functionally, lectin specific for terminal, non-reducing N-acetylgalactosamine (Gal-NAc)-containing carbohydrates including N,N'-diacetyllactosediamine/LDN (GalNAcbeta1-4GlcNAc, LacdiNAc). Specific also for carbohydrates containing N-acetylglucosamine (-GlcNAc) or N-acetyllactosamine (-Galbeta1-4GlcNAc) at the reducing end. Agglutinates human blood group A, AB, B and O erythrocytes with a strong preference for group A. Agglutinates bovine erythrocytes with a very low specificity. Binds carbohydrates bivalently, which is required for its biological activity. Exhibits insecticidal activity against the fruit fly D.melanogaster, mosquito A.aegypti, and amoebozoa A.castellanii. Has anti-nutritional activity against Colorado potato beetle L.decemlineata, and against worm C.elegans. Has antiproliferative activity against human leukemic T-cells. Has an immunostimulatory effect on human antigen-presenting dendritic cells, which are subsequently able to induce efficient T-cell immune responses. This Clitocybe nebularis (Clouded agaric) protein is Ricin B-like lectin.